A 192-amino-acid chain; its full sequence is MSKRDYMNTSVQEPPLDYSFKSVQMIQDLISEEPRTGLRPVKYSKSGKSLTQSLWLNNNVLNDLKDFNQVVSQLLQHPENLAWIDLSFNDLTTIDPVLTTFFNLSVLYLHGNSIHRLGEVNKLAVLPRLRSLTLHGNPIEEEKGYRQYVLCNLPRITTFDFSGVTKADRSTAEVWKRMNIKPKKVRIKQDVL.

3 LRR repeats span residues 49-71 (SLTQ…NQVV), 80-101 (NLAW…LTTF), and 103-124 (NLSV…NKLA). Positions 137-175 (NPIEEEKGYRQYVLCNLPRITTFDFSGVTKADRSTAEVW) constitute an LRRCT domain.

The protein localises to the cytoplasm. The chain is Leucine-rich repeat-containing protein 51 from Rattus norvegicus (Rat).